The chain runs to 548 residues: Thermosome subunit beta (548 aa).

The protein belongs to the TCP-1 chaperonin family. In terms of assembly, forms a Heterooligomeric complex of two stacked eight-membered rings.

In terms of biological role, molecular chaperone; binds unfolded polypeptides in vitro, and has a weak ATPase activity. This is Thermosome subunit beta (thsB) from Aeropyrum pernix (strain ATCC 700893 / DSM 11879 / JCM 9820 / NBRC 100138 / K1).